Consider the following 454-residue polypeptide: Tubulin gamma chain (454 aa).

142–148 (AGGTGSG) is a binding site for GTP.

Belongs to the tubulin family.

The protein localises to the cytoplasm. It is found in the cytoskeleton. It localises to the microtubule organizing center. The protein resides in the spindle pole body. Functionally, tubulin is the major constituent of microtubules. The gamma chain is found at microtubule organizing centers (MTOC) such as the spindle pole or the centrosome, suggesting that it is involved in the minus-end nucleation of microtubule assembly. Interacts physically with beta-tubulin and is involved in microtubule function. The protein is Tubulin gamma chain (mipA) of Emericella nidulans (strain FGSC A4 / ATCC 38163 / CBS 112.46 / NRRL 194 / M139) (Aspergillus nidulans).